A 417-amino-acid polypeptide reads, in one-letter code: GTP-binding protein YPT11 (417 aa).

Positions 1 to 34 are disordered; sequence MSQRKRYSLNVVTSPSIPSPTPSAPIRTNESNWE. GTP is bound by residues 97–104, 228–232, and 292–295; these read GDANVGKT, DTAGQ, and NKID. 2 S-geranylgeranyl cysteine lipidation sites follow: Cys415 and Cys416.

The protein belongs to the small GTPase superfamily. Rab family. As to quaternary structure, interacts with MYO2 (via C-terminal tail domain). Interacts with YIF1, YIP3, YIP4 and YIP5.

It localises to the endoplasmic reticulum membrane. It is found in the bud tip. The protein localises to the bud neck. Functionally, involved in the positive control of both endoplasmic reticulum (ER) and mitochondrion inheritance during cell divison. Required for the MYO2-dependent retention of newly inherited mitochondria at the bud tip in developing daughter cells. The protein is GTP-binding protein YPT11 (YPT11) of Saccharomyces cerevisiae (strain YJM789) (Baker's yeast).